A 236-amino-acid chain; its full sequence is Ribose-5-phosphate isomerase A (236 aa).

Substrate-binding positions include 28-31 (TGST), 83-86 (DGAD), and 96-99 (KGGG). The Proton acceptor role is filled by Glu-105. Lys-123 serves as a coordination point for substrate.

This sequence belongs to the ribose 5-phosphate isomerase family. As to quaternary structure, homodimer.

The catalysed reaction is aldehydo-D-ribose 5-phosphate = D-ribulose 5-phosphate. Its pathway is carbohydrate degradation; pentose phosphate pathway; D-ribose 5-phosphate from D-ribulose 5-phosphate (non-oxidative stage): step 1/1. Its function is as follows. Catalyzes the reversible conversion of ribose-5-phosphate to ribulose 5-phosphate. In Methylorubrum extorquens (strain CM4 / NCIMB 13688) (Methylobacterium extorquens), this protein is Ribose-5-phosphate isomerase A.